The chain runs to 221 residues: Deoxyribose-phosphate aldolase (221 aa).

Residue D89 is the Proton donor/acceptor of the active site. K151 acts as the Schiff-base intermediate with acetaldehyde in catalysis. Catalysis depends on K180, which acts as the Proton donor/acceptor.

The protein belongs to the DeoC/FbaB aldolase family. DeoC type 1 subfamily.

It localises to the cytoplasm. The catalysed reaction is 2-deoxy-D-ribose 5-phosphate = D-glyceraldehyde 3-phosphate + acetaldehyde. It participates in carbohydrate degradation; 2-deoxy-D-ribose 1-phosphate degradation; D-glyceraldehyde 3-phosphate and acetaldehyde from 2-deoxy-alpha-D-ribose 1-phosphate: step 2/2. Its function is as follows. Catalyzes a reversible aldol reaction between acetaldehyde and D-glyceraldehyde 3-phosphate to generate 2-deoxy-D-ribose 5-phosphate. This Brevibacillus brevis (strain 47 / JCM 6285 / NBRC 100599) protein is Deoxyribose-phosphate aldolase.